Reading from the N-terminus, the 122-residue chain is Small ribosomal subunit protein uS13 (122 aa).

The disordered stretch occupies residues 99 to 122 (RGQRTHTNARTRKGPAKAIAGKKK).

Belongs to the universal ribosomal protein uS13 family. Part of the 30S ribosomal subunit. Forms a loose heterodimer with protein S19. Forms two bridges to the 50S subunit in the 70S ribosome.

Its function is as follows. Located at the top of the head of the 30S subunit, it contacts several helices of the 16S rRNA. In the 70S ribosome it contacts the 23S rRNA (bridge B1a) and protein L5 of the 50S subunit (bridge B1b), connecting the 2 subunits; these bridges are implicated in subunit movement. Contacts the tRNAs in the A and P-sites. The protein is Small ribosomal subunit protein uS13 of Sinorhizobium fredii (strain NBRC 101917 / NGR234).